The chain runs to 513 residues: Ankyrin repeat domain-containing protein 13C-B (513 aa).

Residues 1-19 show a composition bias toward basic and acidic residues; the sequence is MTGEKIRSLHRDQKPSKDE. Disordered regions lie at residues 1 to 34 and 55 to 77; these read MTGE…DGTF and PSNP…PMTP. Positions 20-29 are enriched in acidic residues; sequence DLLEPDEEAT. ANK repeat units lie at residues 83–114, 115–144, and 148–177; these read DVYF…QKDN, HGNT…PVKV, and QGWS…QQSR.

The protein localises to the endoplasmic reticulum membrane. Functionally, acts as a molecular chaperone for G protein-coupled receptors, regulating their biogenesis and exit from the ER. The protein is Ankyrin repeat domain-containing protein 13C-B (ankrd13c-b) of Xenopus laevis (African clawed frog).